A 181-amino-acid polypeptide reads, in one-letter code: NADH-quinone oxidoreductase subunit B 2 (181 aa).

[4Fe-4S] cluster is bound by residues C44, C45, C110, and C139.

Belongs to the complex I 20 kDa subunit family. In terms of assembly, NDH-1 is composed of 14 different subunits. Subunits NuoB, C, D, E, F, and G constitute the peripheral sector of the complex. It depends on [4Fe-4S] cluster as a cofactor.

Its subcellular location is the cell inner membrane. The enzyme catalyses a quinone + NADH + 5 H(+)(in) = a quinol + NAD(+) + 4 H(+)(out). In terms of biological role, NDH-1 shuttles electrons from NADH, via FMN and iron-sulfur (Fe-S) centers, to quinones in the respiratory chain. The immediate electron acceptor for the enzyme in this species is believed to be a menaquinone. Couples the redox reaction to proton translocation (for every two electrons transferred, four hydrogen ions are translocated across the cytoplasmic membrane), and thus conserves the redox energy in a proton gradient. This Cytophaga hutchinsonii (strain ATCC 33406 / DSM 1761 / CIP 103989 / NBRC 15051 / NCIMB 9469 / D465) protein is NADH-quinone oxidoreductase subunit B 2.